Reading from the N-terminus, the 298-residue chain is Ethanolamine ammonia-lyase small subunit (298 aa).

Val-210, Glu-231, and Cys-261 together coordinate adenosylcob(III)alamin.

Belongs to the EutC family. As to quaternary structure, the basic unit is a heterodimer which dimerizes to form tetramers. The heterotetramers trimerize; 6 large subunits form a core ring with 6 small subunits projecting outwards. Adenosylcob(III)alamin is required as a cofactor.

It localises to the bacterial microcompartment. The enzyme catalyses ethanolamine = acetaldehyde + NH4(+). It functions in the pathway amine and polyamine degradation; ethanolamine degradation. Its function is as follows. Catalyzes the deamination of various vicinal amino-alcohols to oxo compounds. Allows this organism to utilize ethanolamine as the sole source of nitrogen and carbon in the presence of external vitamin B12. This Salmonella dublin (strain CT_02021853) protein is Ethanolamine ammonia-lyase small subunit.